A 304-amino-acid chain; its full sequence is Ribosomal RNA small subunit methyltransferase H (304 aa).

S-adenosyl-L-methionine is bound by residues glycine 37–histidine 39, aspartate 57, phenylalanine 79, aspartate 100, and histidine 107.

The protein belongs to the methyltransferase superfamily. RsmH family.

The protein localises to the cytoplasm. It carries out the reaction cytidine(1402) in 16S rRNA + S-adenosyl-L-methionine = N(4)-methylcytidine(1402) in 16S rRNA + S-adenosyl-L-homocysteine + H(+). Functionally, specifically methylates the N4 position of cytidine in position 1402 (C1402) of 16S rRNA. This Bacteroides fragilis (strain YCH46) protein is Ribosomal RNA small subunit methyltransferase H.